Here is a 274-residue protein sequence, read N- to C-terminus: MRSNNNNPLTRDEILSRYFPQYRPAVAASQGLSGGSCIIAHDTHRVVLRRHHDPDAPPAHFLRHYRALSQLPASLAPRALFYTPGWMAVEYLHGVVNSALPDADELAALLYHLHQQPRFGWRIALSPLLAQYWSCCDPARRTPFWLRRLKQLQKNGEPRPLRLAPLHMDVHGDNIVLTSAGLRLIDWEYAGDGDIALELAAVWVEDERQHRQLADAYAARARIDARQLWRQIRLWHPWVIMLKAGWFEYRWRQTGEQQFIRLADETWRQLRMKG.

It belongs to the thiamine kinase family.

It carries out the reaction thiamine + ATP = thiamine phosphate + ADP + H(+). It functions in the pathway cofactor biosynthesis; thiamine diphosphate biosynthesis; thiamine phosphate from thiamine: step 1/1. Functionally, catalyzes the ATP-dependent phosphorylation of thiamine to thiamine phosphate. Is involved in thiamine salvage. The protein is Thiamine kinase of Salmonella heidelberg (strain SL476).